We begin with the raw amino-acid sequence, 229 residues long: Ribonuclease 3 (229 aa).

Residues 7–132 (LRAFESRIGH…VIAAVYLDAG (126 aa)) form the RNase III domain. Residue glutamate 45 coordinates Mg(2+). Aspartate 49 is an active-site residue. Aspartate 118 and glutamate 121 together coordinate Mg(2+). The active site involves glutamate 121. The DRBM domain occupies 157–226 (DAKTALQEWA…ARALLARMEA (70 aa)).

Belongs to the ribonuclease III family. Homodimer. It depends on Mg(2+) as a cofactor.

Its subcellular location is the cytoplasm. It carries out the reaction Endonucleolytic cleavage to 5'-phosphomonoester.. Functionally, digests double-stranded RNA. Involved in the processing of primary rRNA transcript to yield the immediate precursors to the large and small rRNAs (23S and 16S). Processes some mRNAs, and tRNAs when they are encoded in the rRNA operon. Processes pre-crRNA and tracrRNA of type II CRISPR loci if present in the organism. In Cereibacter sphaeroides (strain ATCC 17025 / ATH 2.4.3) (Rhodobacter sphaeroides), this protein is Ribonuclease 3.